The primary structure comprises 213 residues: Orotate phosphoribosyltransferase (213 aa).

K26 is a 5-phospho-alpha-D-ribose 1-diphosphate binding site. 34–35 serves as a coordination point for orotate; that stretch reads FF. Residues 72-73, R98, K99, K102, H104, and 123-131 contribute to the 5-phospho-alpha-D-ribose 1-diphosphate site; these read YK and DDVISAGTS. The orotate site is built by S127 and R155.

Belongs to the purine/pyrimidine phosphoribosyltransferase family. PyrE subfamily. As to quaternary structure, homodimer. Mg(2+) is required as a cofactor.

It carries out the reaction orotidine 5'-phosphate + diphosphate = orotate + 5-phospho-alpha-D-ribose 1-diphosphate. The protein operates within pyrimidine metabolism; UMP biosynthesis via de novo pathway; UMP from orotate: step 1/2. Catalyzes the transfer of a ribosyl phosphate group from 5-phosphoribose 1-diphosphate to orotate, leading to the formation of orotidine monophosphate (OMP). This is Orotate phosphoribosyltransferase from Neisseria meningitidis serogroup A / serotype 4A (strain DSM 15465 / Z2491).